The primary structure comprises 701 residues: Type 3 secretion system secretin (701 aa).

Positions 1-21 (MRKALMWLPLLLIGLSPATWA) are cleaved as a signal peptide. A compositionally biased stretch (gly residues) spans 229 to 238 (RGNGLAGGGS). The interval 229 to 252 (RGNGLAGGGSPDTPSLPMSSSGLD) is disordered. Residues 240 to 252 (DTPSLPMSSSGLD) show a composition bias toward polar residues.

The protein belongs to the bacterial secretin family. T3SS SctC subfamily. The core secretion machinery of the T3SS is composed of approximately 20 different proteins, including cytoplasmic components, a base, an export apparatus and a needle. This subunit is part of the base, which anchors the injectisome in the bacterial cell envelope. Forms a stable homooligomeric complex.

Its subcellular location is the cell outer membrane. Component of the type III secretion system (T3SS), also called injectisome, which is used to inject bacterial effector proteins into eukaryotic host cells. Forms a ring-shaped multimeric structure with an apparent central pore in the outer membrane. Involved in the secretion of a proteinaceous elicitor of the hypersensitivity response in plants. This chain is Type 3 secretion system secretin, found in Pseudomonas syringae pv. syringae.